Consider the following 149-residue polypeptide: Ribonuclease pancreatic (149 aa).

Positions methionine 1–glycine 25 are cleaved as a signal peptide. The substrate site is built by lysine 32 and arginine 35. Histidine 37 (proton acceptor) is an active-site residue. 4 disulfide bridges follow: cysteine 51–cysteine 109, cysteine 65–cysteine 120, cysteine 83–cysteine 135, and cysteine 90–cysteine 97. Substrate-binding positions include lysine 66 to threonine 70 and lysine 91. Residue histidine 144 is the Proton donor of the active site.

This sequence belongs to the pancreatic ribonuclease family. As to quaternary structure, monomer. Interacts with and forms tight 1:1 complexes with RNH1. Dimerization of two such complexes may occur. Interaction with RNH1 inhibits this protein. As to expression, pancreas.

It localises to the secreted. It carries out the reaction an [RNA] containing cytidine + H2O = an [RNA]-3'-cytidine-3'-phosphate + a 5'-hydroxy-ribonucleotide-3'-[RNA].. The catalysed reaction is an [RNA] containing uridine + H2O = an [RNA]-3'-uridine-3'-phosphate + a 5'-hydroxy-ribonucleotide-3'-[RNA].. In terms of biological role, endonuclease that catalyzes the cleavage of RNA on the 3' side of pyrimidine nucleotides. Acts on single-stranded and double-stranded RNA. In Mus musculus (Mouse), this protein is Ribonuclease pancreatic (Rnase1).